The following is a 146-amino-acid chain: Globin (146 aa).

N-acetylserine is present on S1. The region spanning 1 to 146 (SLSGAEADLL…IIDALKKAGK (146 aa)) is the Globin domain. Heme b is bound at residue H95.

The protein belongs to the globin family. Monomer.

The protein is Globin of Bursatella leachii (Ragged sea hare).